Here is a 476-residue protein sequence, read N- to C-terminus: Glucose-1-phosphate adenylyltransferase (476 aa).

Alpha-D-glucose 1-phosphate contacts are provided by residues Tyr114, Gly179, Glu194–Lys195, and Ser212.

Belongs to the bacterial/plant glucose-1-phosphate adenylyltransferase family. As to quaternary structure, homotetramer.

The catalysed reaction is alpha-D-glucose 1-phosphate + ATP + H(+) = ADP-alpha-D-glucose + diphosphate. Its pathway is glycan biosynthesis; glycogen biosynthesis. Involved in the biosynthesis of ADP-glucose, a building block required for the elongation reactions to produce glycogen. Catalyzes the reaction between ATP and alpha-D-glucose 1-phosphate (G1P) to produce pyrophosphate and ADP-Glc. The protein is Glucose-1-phosphate adenylyltransferase of Yersinia pestis bv. Antiqua (strain Antiqua).